The sequence spans 285 residues: uncharacterized protein (285 aa).

Positions 92–199 (TLLLADVEES…PTINRTARLR (108 aa)) constitute a Guanylate cyclase domain.

The protein belongs to the adenylyl cyclase class-4/guanylyl cyclase family.

This is an uncharacterized protein from Mycobacterium tuberculosis (strain ATCC 25618 / H37Rv).